Here is a 466-residue protein sequence, read N- to C-terminus: Ribosome biogenesis protein YTM1 (466 aa).

The interval 11 to 99 is ubiquitin-like (UBL) domain; sequence IKIKFFTNEE…EAFLTLEYTR (89 aa). A sufficient for interaction with ERB1 and association with 66S pre-ribosomes region spans residues 109 to 466; it reads SFNNDDWISS…QINKGSDIAK (358 aa). 7 WD repeats span residues 124 to 163, 165 to 203, 219 to 258, 296 to 336, 338 to 377, 384 to 424, and 431 to 466; these read PTTKIVMSSQLSISQPKILSGSYDGIVRTYNMSGKVEKQY, GHSAPVKAVKWISPTRIVSAGNDRQVRLWKTSYEEIIDE, GHKAPVVDLAVDTQTNRILSAGYDQNIGFWSTNYKEMTSI, GHSE…CVDT, TTGYSLLSVLQLPQVNLIASGSSARHINLHDPRVTTTSDQ, GHTN…SLYT, and STNAKIFDVCWDDRIGIISGGEDKKLQINKGSDIAK.

It belongs to the WD repeat WDR12/YTM1 family. As to quaternary structure, component of the NOP7 complex, composed of ERB1, NOP7 and YTM1. The complex is held together by ERB1, which interacts with NOP7 via its N-terminal domain and with YTM1 via a high-affinity interaction between the seven-bladed beta-propeller domains of the 2 proteins. The NOP7 complex associates with the 66S pre-ribosome. Interacts (via UBL domain) with MDN1 (via VWFA/MIDAS domain).

Its subcellular location is the nucleus. It is found in the nucleolus. The protein resides in the nucleoplasm. Functionally, component of the NOP7 complex, which is required for maturation of the 25S and 5.8S ribosomal RNAs and formation of the 60S ribosome. This Candida albicans (strain SC5314 / ATCC MYA-2876) (Yeast) protein is Ribosome biogenesis protein YTM1.